The primary structure comprises 91 residues: MALLDFFLSRKKSTANIAKERLQIIVAERRRGDCEPHYLPQLKRDILEVICKYVKIDPEMLSVKLDQKDDDISILELNVTLPESEAEEVHK.

This sequence belongs to the MinE family.

Its function is as follows. Prevents the cell division inhibition by proteins MinC and MinD at internal division sites while permitting inhibition at polar sites. This ensures cell division at the proper site by restricting the formation of a division septum at the midpoint of the long axis of the cell. This is Cell division topological specificity factor from Erwinia tasmaniensis (strain DSM 17950 / CFBP 7177 / CIP 109463 / NCPPB 4357 / Et1/99).